The sequence spans 1279 residues: Sterol regulatory element-binding protein cleavage-activating protein (1279 aa).

Topologically, residues 1–18 are cytoplasmic; it reads MTLTERLREKISQAFYNH. Residues 19–39 form a helical membrane-spanning segment; the sequence is GLLCASYPIPIILFTGLCILA. At 40 to 279 the chain is on the lumenal side; that stretch reads CCYPLLKLPL…SLVHVHFKEE (240 aa). Residues 46–284 form a loop-1 region; sequence KLPLPGTGPV…HFKEEIGIAE (239 aa). The interval 60 to 81 is disordered; it reads PVKDYSPPPSASDHKPGEPSEQ. N-linked (GlcNAc...) asparagine glycosylation is present at Asn-263. Residues 280-300 form a helical membrane-spanning segment; sequence IGIAELIPLVTTYIILFAYIY. The region spanning 284–442 is the SSD domain; that stretch reads ELIPLVTTYI…MPFFTTVLSI (159 aa). Topologically, residues 301–312 are cytoplasmic; the sequence is FSTRKIDMVKSK. The chain crosses the membrane as a helical span at residues 313 to 333; that stretch reads WGLALAAVVTVLSSLLMSVGL. At 334–344 the chain is on the lumenal side; that stretch reads CTLFGLTPTLN. A helical membrane pass occupies residues 345 to 365; the sequence is GGEIFPYLVVVIGLENVLVLT. The Cytoplasmic segment spans residues 366–401; the sequence is KSVVSTPVDLEVKLRIAQGLSSESWSIMKNMATELG. The chain crosses the membrane as a helical span at residues 402-422; that stretch reads IILIGYFTLVPAIQEFCLFAV. Position 423 (Val-423) is a topological domain, lumenal. Residues 424–444 form a helical membrane-spanning segment; that stretch reads GLVSDFFLQMPFFTTVLSIDI. The Cytoplasmic portion of the chain corresponds to 445–518; the sequence is RRMELADLNK…FLARTRLAQR (74 aa). The ER export signal motif lies at 447 to 452; it reads MELADL. Glycyl lysine isopeptide (Lys-Gly) (interchain with G-Cter in ubiquitin) cross-links involve residues Lys-454 and Lys-466. The helical transmembrane segment at 519 to 539 threads the bilayer; the sequence is LIMAGTVVWIGILAYTDPAGL. The segment at 535–710 is loop-7; sequence DPAGLRTYLA…QAHRDVTLYK (176 aa). The Lumenal portion of the chain corresponds to 540–707; the sequence is RTYLAAQVTE…GVAQAHRDVT (168 aa). The segment at 588–617 is disordered; it reads LENQTLPGEPPEPGGQAEGVHDSPAPEVTW. N-linked (GlcNAc...) asparagine glycosylation is found at Asn-590 and Asn-641. A disordered region spans residues 668-696; it reads EGRHPQDSRSAWSPPQPAQGGLWDAGPKG. The helical transmembrane segment at 708–728 threads the bilayer; it reads LYKVAALGLATGILLVLLLCL. The Cytoplasmic portion of the chain corresponds to 729–1279; the sequence is YRVLCPRNYG…YVPSVLEKLD (551 aa). The interval 730 to 1279 is interaction with SREBF2; it reads RVLCPRNYGQ…YVPSVLEKLD (550 aa). One copy of the WD 1 repeat lies at 770-810; sequence VLRGHLMDIECLASDGMLLVSCCLAGHVCVWDAQTGDCLTR. 4 positions are modified to phosphoserine: Ser-821, Ser-837, Ser-843, and Ser-850. Disordered regions lie at residues 834–868, 883–903, and 925–959; these read ERLSDGGKASPEEPGDSPPLRHRPRGTPLPSLFGD, HPRLPELDHPEPRHRSGCRRT, and VPMHTPAPRPPSPGPTPPQTPEDEGSFPPEKGSPS. Residues 885 to 896 show a composition bias toward basic and acidic residues; the sequence is RLPELDHPEPRH. Residues 929–944 are compositionally biased toward pro residues; that stretch reads TPAPRPPSPGPTPPQT. Position 936 is a phosphoserine (Ser-936). 2 WD repeats span residues 952-1002 and 1005-1042; these read PPEK…LRCS and EVASGITALVFLDKRIVAARLNGSLDFFSLETHTALSP. An Omega-N-methylarginine modification is found at Arg-1051. WD repeat units lie at residues 1077–1114, 1117–1155, 1158–1195, and 1197–1235; these read AHQKPITALKAAAGRLVTGSQDHTLRVFRLEDSCCLFT, GHSGAITTVYIDQTMVLASGGQDGAICLWDVLTGSRVSH, AHRGDVTSLTCTTSCVISSGLDDLISIWDRSTGIKLYS, and QQDLGCGASLGVISDNLLVTGGQGCVSFWDLNYGDLLQT.

Belongs to the WD repeat SCAP family. In terms of assembly, membrane region forms a homotetramer. Component of the SCAP-SREBP complex (composed of SCAP and SREBF1/SREBP1 or SREBF2/SREBP2); interacts with SREBF1/SREBP1 or SREBF2/SREBP2 through its C-terminal cytoplasmic domain. Forms a ternary complex with INSIG1 or INSIG2 through its transmembrane domains at high sterol concentrations. Interacts with PAQR3; the interaction anchors the SCAP-SREBP complex to the Golgi apparatus in low cholesterol conditions. Interacts with the SEC23-SEC24 complex in a SAR1-GTP-dependent manner through an ER export signal in its third cytoplasmic loop. Interacts with RNF139; the interaction inhibits the interaction of SCAP with SEC24B and hampering the ER to Golgi transport of the SCAP-SREBP complex. Interacts with SPRING1. Ubiquitinated at Lys-454 and Lys-466. RNF145 triggers ubiquitination of SCAP, likely inhibiting SCAP-SREBP complex transport to the Golgi apparatus and the subsequent processing/maturation of SREBF2/SREBP2. As to expression, widely expressed with higher levels in lung, kidney, gut, brain and adipose tissue. Expressed in liver and muscle. Isoform 3 expressed in testis. In terms of tissue distribution, expressed in testis.

It is found in the endoplasmic reticulum membrane. The protein resides in the golgi apparatus membrane. Its subcellular location is the cytoplasmic vesicle. The protein localises to the COPII-coated vesicle membrane. In terms of biological role, escort protein required for cholesterol as well as lipid homeostasis. Regulates export of the SCAP-SREBP complex from the endoplasmic reticulum to the Golgi upon low cholesterol, thereby regulating the processing of sterol regulatory element-binding proteins (SREBPs) SREBF1/SREBP1 and SREBF2/SREBP2. At high sterol concentrations, formation of a ternary complex with INSIG (INSIG1 or INSIG2) leads to mask the ER export signal in SCAP, promoting retention of the complex in the endoplasmic reticulum. Low sterol concentrations trigger release of INSIG, a conformational change in the SSD domain of SCAP, unmasking of the ER export signal, promoting recruitment into COPII-coated vesicles and transport of the SCAP-SREBP to the Golgi: in the Golgi, SREBPs are then processed, releasing the transcription factor fragment of SREBPs from the membrane, its import into the nucleus and up-regulation of LDLR, INSIG1 and the mevalonate pathway. Binds cholesterol via its SSD domain. This Sus scrofa (Pig) protein is Sterol regulatory element-binding protein cleavage-activating protein.